The chain runs to 556 residues: Hydroxylamine reductase (556 aa).

[4Fe-4S] cluster contacts are provided by cysteine 5, cysteine 8, cysteine 17, and cysteine 23. Residues histidine 249, glutamate 273, cysteine 317, cysteine 409, cysteine 437, cysteine 462, glutamate 497, and lysine 499 each contribute to the hybrid [4Fe-2O-2S] cluster site. Cysteine 409 is modified (cysteine persulfide).

The protein belongs to the HCP family. [4Fe-4S] cluster serves as cofactor. Requires hybrid [4Fe-2O-2S] cluster as cofactor.

The protein localises to the cytoplasm. It carries out the reaction A + NH4(+) + H2O = hydroxylamine + AH2 + H(+). In terms of biological role, catalyzes the reduction of hydroxylamine to form NH(3) and H(2)O. In Kosmotoga olearia (strain ATCC BAA-1733 / DSM 21960 / TBF 19.5.1), this protein is Hydroxylamine reductase.